Reading from the N-terminus, the 123-residue chain is Large ribosomal subunit protein mL52 (123 aa).

Residues 1-23 constitute a mitochondrion transit peptide; that stretch reads MAALGTVLFTGVRRLHCSVAAWA. Positions 99-109 are enriched in basic and acidic residues; the sequence is QEEQRKQENAL. The disordered stretch occupies residues 99–123; that stretch reads QEEQRKQENALKPKGASLKSPLPSQ.

This sequence belongs to the mitochondrion-specific ribosomal protein mL52 family. In terms of assembly, component of the mitochondrial large ribosomal subunit (mt-LSU). Mature mammalian 55S mitochondrial ribosomes consist of a small (28S) and a large (39S) subunit. The 28S small subunit contains a 12S ribosomal RNA (12S mt-rRNA) and 30 different proteins. The 39S large subunit contains a 16S rRNA (16S mt-rRNA), a copy of mitochondrial valine transfer RNA (mt-tRNA(Val)), which plays an integral structural role, and 52 different proteins. mL52 connects the central protuberance to the body of the ribosome.

It localises to the mitochondrion. This chain is Large ribosomal subunit protein mL52 (MRPL52), found in Homo sapiens (Human).